Consider the following 207-residue polypeptide: Large ribosomal subunit protein bL25 (207 aa).

The segment at 1-20 (MANHQIKAQRRKDEGKGASR) is disordered.

It belongs to the bacterial ribosomal protein bL25 family. CTC subfamily. In terms of assembly, part of the 50S ribosomal subunit; part of the 5S rRNA/L5/L18/L25 subcomplex. Contacts the 5S rRNA. Binds to the 5S rRNA independently of L5 and L18.

This is one of the proteins that binds to the 5S RNA in the ribosome where it forms part of the central protuberance. This is Large ribosomal subunit protein bL25 from Xylella fastidiosa (strain M12).